We begin with the raw amino-acid sequence, 525 residues long: GMP synthase [glutamine-hydrolyzing] (525 aa).

The Glutamine amidotransferase type-1 domain occupies R9–L207. The active-site Nucleophile is the C86. Catalysis depends on residues H181 and E183. Residues W208–R400 form the GMPS ATP-PPase domain. S235–S241 lines the ATP pocket.

Homodimer.

The enzyme catalyses XMP + L-glutamine + ATP + H2O = GMP + L-glutamate + AMP + diphosphate + 2 H(+). Its pathway is purine metabolism; GMP biosynthesis; GMP from XMP (L-Gln route): step 1/1. In terms of biological role, catalyzes the synthesis of GMP from XMP. This chain is GMP synthase [glutamine-hydrolyzing], found in Shigella boydii serotype 18 (strain CDC 3083-94 / BS512).